The primary structure comprises 623 residues: UvrABC system protein C (623 aa).

Residues 28–105 enclose the GIY-YIG domain; that stretch reads GAPGVYRMLD…IKQLKPKYNV (78 aa). The 36-residue stretch at 215 to 250 folds into the UVR domain; the sequence is TRVQEELAEQMMAASEAMEFERAAALRDRIRALTTV.

The protein belongs to the UvrC family. As to quaternary structure, interacts with UvrB in an incision complex.

The protein resides in the cytoplasm. Functionally, the UvrABC repair system catalyzes the recognition and processing of DNA lesions. UvrC both incises the 5' and 3' sides of the lesion. The N-terminal half is responsible for the 3' incision and the C-terminal half is responsible for the 5' incision. The chain is UvrABC system protein C from Ruegeria pomeroyi (strain ATCC 700808 / DSM 15171 / DSS-3) (Silicibacter pomeroyi).